Consider the following 393-residue polypeptide: Short-chain dehydrogenase/reductase family 42E member 1 (393 aa).

The Proton acceptor role is filled by Y152. K156 contacts NAD(+). Transmembrane regions (helical) follow at residues 282–302 and 371–391; these read LPLT…FILG and GLLV…SVIL.

It belongs to the 3-beta-HSD family.

The protein localises to the membrane. This is Short-chain dehydrogenase/reductase family 42E member 1 (SDR42E1) from Macaca fascicularis (Crab-eating macaque).